We begin with the raw amino-acid sequence, 341 residues long: S-adenosylmethionine:tRNA ribosyltransferase-isomerase (341 aa).

This sequence belongs to the QueA family. As to quaternary structure, monomer.

The protein localises to the cytoplasm. It carries out the reaction 7-aminomethyl-7-carbaguanosine(34) in tRNA + S-adenosyl-L-methionine = epoxyqueuosine(34) in tRNA + adenine + L-methionine + 2 H(+). Its pathway is tRNA modification; tRNA-queuosine biosynthesis. Functionally, transfers and isomerizes the ribose moiety from AdoMet to the 7-aminomethyl group of 7-deazaguanine (preQ1-tRNA) to give epoxyqueuosine (oQ-tRNA). This is S-adenosylmethionine:tRNA ribosyltransferase-isomerase from Staphylococcus epidermidis (strain ATCC 12228 / FDA PCI 1200).